Consider the following 847-residue polypeptide: Alanine--tRNA ligase (847 aa).

Positions 554, 558, 656, and 660 each coordinate Zn(2+).

It belongs to the class-II aminoacyl-tRNA synthetase family. Zn(2+) is required as a cofactor.

It is found in the cytoplasm. The catalysed reaction is tRNA(Ala) + L-alanine + ATP = L-alanyl-tRNA(Ala) + AMP + diphosphate. In terms of biological role, catalyzes the attachment of alanine to tRNA(Ala) in a two-step reaction: alanine is first activated by ATP to form Ala-AMP and then transferred to the acceptor end of tRNA(Ala). Also edits incorrectly charged Ser-tRNA(Ala) and Gly-tRNA(Ala) via its editing domain. This chain is Alanine--tRNA ligase, found in Helicobacter pylori (strain HPAG1).